The following is a 98-amino-acid chain: NADH-ubiquinone oxidoreductase chain 4L (98 aa).

Helical transmembrane passes span 1–21, 29–49, and 61–81; these read MTMVYANIFLAFIMSLMGLLM, SLLCLEGMMLSLFVMMTVTIL, and IILLVFAACEAALGLSLLVMV.

This sequence belongs to the complex I subunit 4L family. In terms of assembly, core subunit of respiratory chain NADH dehydrogenase (Complex I) which is composed of 45 different subunits.

The protein resides in the mitochondrion inner membrane. The catalysed reaction is a ubiquinone + NADH + 5 H(+)(in) = a ubiquinol + NAD(+) + 4 H(+)(out). Its function is as follows. Core subunit of the mitochondrial membrane respiratory chain NADH dehydrogenase (Complex I) which catalyzes electron transfer from NADH through the respiratory chain, using ubiquinone as an electron acceptor. Part of the enzyme membrane arm which is embedded in the lipid bilayer and involved in proton translocation. This chain is NADH-ubiquinone oxidoreductase chain 4L (MT-ND4L), found in Mirounga angustirostris (Northern elephant seal).